The chain runs to 793 residues: Protocadherin beta-7 (793 aa).

A signal peptide spans Met1–Ala26. Over Gly27–Leu688 the chain is Extracellular. Cadherin domains lie at Val35–Phe133, Ile138–Phe242, Tyr247–Leu347, Leu352–Phe451, and Tyr456–Val561. Asn169 is a glycosylation site (N-linked (GlcNAc...) asparagine). 2 N-linked (GlcNAc...) asparagine glycosylation sites follow: Asn418 and Asn436. A glycan (N-linked (GlcNAc...) asparagine) is linked at Asn567. The region spanning Ser568–Leu671 is the Cadherin 6 domain. The helical transmembrane segment at Val689–Val709 threads the bilayer. The Cytoplasmic segment spans residues Arg710 to Phe793.

The protein localises to the cell membrane. Functionally, potential calcium-dependent cell-adhesion protein. May be involved in the establishment and maintenance of specific neuronal connections in the brain. This is Protocadherin beta-7 (PCDHB7) from Pan troglodytes (Chimpanzee).